We begin with the raw amino-acid sequence, 4568 residues long: Dynein beta chain, flagellar outer arm (4568 aa).

The segment at 1–1880 (MAEDEGMTAA…QVNICDAEIA (1880 aa)) is stem. 5 coiled-coil regions span residues 277–293 (FQRLFREVEAAQQEAND), 1158–1175 (EEAAAKKAAEEEEKRKAL), 1372–1400 (KIDVDFLVEETKKLSKDIKMLNKAVRNYD), 1614–1650 (EACTLDGRQERLENMQSMLEQCEKALQEYLETKRVAF), and 1778–1825 (QEIN…RKKL). The segment at 1144–1166 (GVEEEPEYHPDQDPEEAAAKKAA) is disordered. Basic and acidic residues predominate over residues 1150–1166 (EYHPDQDPEEAAAKKAA). AAA regions lie at residues 1881–2102 (YSYE…TLYV), 2164–2385 (EAAH…RNFK), 2493–2738 (QYIP…ITQG), and 2841–3090 (EYNE…FRRY). ATP-binding positions include 1919–1926 (GPAGTGKT), 2202–2209 (GAAGCGKT), and 2530–2537 (GNTGTGKS). Residues 2831 to 2848 (LRKTLEDKLREYNESNAV) are a coiled coil. 2879–2886 (GVGGSGKQ) is a binding site for ATP. 3 coiled-coil regions span residues 3106 to 3162 (KMLL…DELI), 3339 to 3425 (KRAA…RLES), and 3648 to 3728 (HERP…KARE). Residues 3106–3425 (KMLLQLKRDD…WGAEIKRLES (320 aa)) are stalk. 2 AAA regions span residues 3481–3711 (LTDD…EIEE) and 3937–4172 (MGRF…TANN).

Belongs to the dynein heavy chain family. As to quaternary structure, consists of at least 3 heavy chains (alpha, beta and gamma), 2 intermediate chains and 8 light chains.

The protein resides in the cell projection. It is found in the cilium. Its subcellular location is the flagellum. The protein localises to the cytoplasm. It localises to the cytoskeleton. The protein resides in the flagellum axoneme. Force generating protein of eukaryotic cilia and flagella. Produces force towards the minus ends of microtubules. Dynein has ATPase activity; the force-producing power stroke is thought to occur on release of ADP. This is Dynein beta chain, flagellar outer arm (ODA4) from Chlamydomonas reinhardtii (Chlamydomonas smithii).